A 162-amino-acid chain; its full sequence is UPF0262 protein HNE_1347 (162 aa).

It belongs to the UPF0262 family.

The sequence is that of UPF0262 protein HNE_1347 from Hyphomonas neptunium (strain ATCC 15444).